The sequence spans 159 residues: NAD(P)H-quinone oxidoreductase subunit J, chloroplastic (159 aa).

Belongs to the complex I 30 kDa subunit family. As to quaternary structure, NDH is composed of at least 16 different subunits, 5 of which are encoded in the nucleus. Leaves.

The protein localises to the plastid. Its subcellular location is the chloroplast thylakoid membrane. It catalyses the reaction a plastoquinone + NADH + (n+1) H(+)(in) = a plastoquinol + NAD(+) + n H(+)(out). The enzyme catalyses a plastoquinone + NADPH + (n+1) H(+)(in) = a plastoquinol + NADP(+) + n H(+)(out). Its function is as follows. NDH shuttles electrons from NAD(P)H:plastoquinone, via FMN and iron-sulfur (Fe-S) centers, to quinones in the photosynthetic chain and possibly in a chloroplast respiratory chain. The immediate electron acceptor for the enzyme in this species is believed to be plastoquinone. Couples the redox reaction to proton translocation, and thus conserves the redox energy in a proton gradient. This Zea mays (Maize) protein is NAD(P)H-quinone oxidoreductase subunit J, chloroplastic.